The chain runs to 362 residues: N5-carboxyaminoimidazole ribonucleotide synthase (362 aa).

Residues arginine 85, lysine 125, 130–136, 158–161, glutamate 166, and 244–245 each bind ATP; these read GYDGRGQ, EKFI, and NE. Residues 89–274 enclose the ATP-grasp domain; sequence KSLLDELNLS…QFELHLRALL (186 aa).

This sequence belongs to the PurK/PurT family. Homodimer.

It carries out the reaction 5-amino-1-(5-phospho-beta-D-ribosyl)imidazole + hydrogencarbonate + ATP = 5-carboxyamino-1-(5-phospho-D-ribosyl)imidazole + ADP + phosphate + 2 H(+). The protein operates within purine metabolism; IMP biosynthesis via de novo pathway; 5-amino-1-(5-phospho-D-ribosyl)imidazole-4-carboxylate from 5-amino-1-(5-phospho-D-ribosyl)imidazole (N5-CAIR route): step 1/2. Functionally, catalyzes the ATP-dependent conversion of 5-aminoimidazole ribonucleotide (AIR) and HCO(3)(-) to N5-carboxyaminoimidazole ribonucleotide (N5-CAIR). The protein is N5-carboxyaminoimidazole ribonucleotide synthase of Haemophilus influenzae (strain ATCC 51907 / DSM 11121 / KW20 / Rd).